Consider the following 160-residue polypeptide: Putative NrdI-like protein (160 aa).

The protein belongs to the NrdI family.

The chain is Putative NrdI-like protein from Streptococcus pyogenes serotype M6 (strain ATCC BAA-946 / MGAS10394).